A 117-amino-acid chain; its full sequence is Photosystem II reaction center Psb28 protein (117 aa).

It belongs to the Psb28 family. As to quaternary structure, part of the photosystem II complex.

It is found in the cellular thylakoid membrane. This is Photosystem II reaction center Psb28 protein from Prochlorococcus marinus (strain AS9601).